A 678-amino-acid chain; its full sequence is Endoplasmic reticulum membrane-associated RNA degradation protein (678 aa).

2 consecutive transmembrane segments (helical) span residues 390–410 (LLAF…LSVF) and 587–607 (VLSL…AVCG).

The protein localises to the endoplasmic reticulum membrane. Functionally, may play a role in neuronal migration during embryonic development. The sequence is that of Endoplasmic reticulum membrane-associated RNA degradation protein (ERMARD) from Homo sapiens (Human).